The primary structure comprises 2131 residues: Protein Ycf2 (2131 aa).

Position 1484-1491 (1484-1491 (GSIGTGRS)) interacts with ATP.

Belongs to the Ycf2 family.

It is found in the plastid. Its subcellular location is the chloroplast stroma. In terms of biological role, probable ATPase of unknown function. Its presence in a non-photosynthetic plant (Epifagus virginiana) and experiments in tobacco indicate that it has an essential function which is probably not related to photosynthesis. The chain is Protein Ycf2 (ycf2-A) from Spinacia oleracea (Spinach).